The following is a 354-amino-acid chain: Histidinol-phosphate aminotransferase (354 aa).

Lysine 215 carries the post-translational modification N6-(pyridoxal phosphate)lysine.

This sequence belongs to the class-II pyridoxal-phosphate-dependent aminotransferase family. Histidinol-phosphate aminotransferase subfamily. In terms of assembly, homodimer. It depends on pyridoxal 5'-phosphate as a cofactor.

The catalysed reaction is L-histidinol phosphate + 2-oxoglutarate = 3-(imidazol-4-yl)-2-oxopropyl phosphate + L-glutamate. Its pathway is amino-acid biosynthesis; L-histidine biosynthesis; L-histidine from 5-phospho-alpha-D-ribose 1-diphosphate: step 7/9. The sequence is that of Histidinol-phosphate aminotransferase from Vesicomyosocius okutanii subsp. Calyptogena okutanii (strain HA).